Consider the following 193-residue polypeptide: Thioredoxin reductase-like selenoprotein T1b (193 aa).

Positions 1-21 (METRCLYLLLVCVLSVNHATA) are cleaved as a signal peptide. Residues 44 to 47 (CVSU) constitute a cross-link (cysteinyl-selenocysteine (Cys-Sec)). Selenocysteine 47 is a non-standard amino acid (selenocysteine).

The protein belongs to the SelWTH family. Selenoprotein T subfamily. In terms of processing, may contain a selenide-sulfide bond between Cys-44 and Sec-47. This bond is speculated to serve as redox-active pair. As to expression, widely expressed in the embryo. High level in embryonic blood at 24 hours post-fertilization (hpf).

Its subcellular location is the endoplasmic reticulum membrane. The enzyme catalyses [thioredoxin]-dithiol + NADP(+) = [thioredoxin]-disulfide + NADPH + H(+). Selenoprotein with thioredoxin reductase-like oxidoreductase activity. In Danio rerio (Zebrafish), this protein is Thioredoxin reductase-like selenoprotein T1b.